The following is a 590-amino-acid chain: Sperm-associated microtubule inner protein 4 (590 aa).

Thr-219 is subject to Phosphothreonine. 2 positions are modified to phosphoserine: Ser-407 and Ser-422. Lys-427 participates in a covalent cross-link: Glycyl lysine isopeptide (Lys-Gly) (interchain with G-Cter in SUMO2). Position 442 is a phosphotyrosine (Tyr-442). At Ser-485 the chain carries Phosphoserine. A Glycyl lysine isopeptide (Lys-Gly) (interchain with G-Cter in SUMO2) cross-link involves residue Lys-545. Phosphoserine is present on Ser-547.

As to expression, predominantly expressed in the testes.

The protein resides in the cytoplasm. The protein localises to the cytoskeleton. It localises to the microtubule organizing center. Its subcellular location is the centrosome. It is found in the flagellum axoneme. Its function is as follows. Microtubule inner protein (MIP) part of the dynein-decorated doublet microtubules (DMTs) in flagellum axoneme. May serve to reinforce and thus stabilize the microtubule structure in the sperm flagella. The chain is Sperm-associated microtubule inner protein 4 from Homo sapiens (Human).